The following is a 203-amino-acid chain: Recombination protein RecR (203 aa).

The C4-type zinc finger occupies 57-72 (CQRCRTLAETPLCSIC). Residues 80–175 (GLLCVVESPA…RLSRLAYGVP (96 aa)) form the Toprim domain.

Belongs to the RecR family.

May play a role in DNA repair. It seems to be involved in an RecBC-independent recombinational process of DNA repair. It may act with RecF and RecO. This is Recombination protein RecR from Chromohalobacter salexigens (strain ATCC BAA-138 / DSM 3043 / CIP 106854 / NCIMB 13768 / 1H11).